Reading from the N-terminus, the 184-residue chain is Small ribosomal subunit protein uS4 (184 aa).

Residues 108 to 172 (RRLQTQVHRL…SPMTKESHPE (65 aa)) enclose the S4 RNA-binding domain. The disordered stretch occupies residues 163-184 (SPMTKESHPERPAQIAASVVEE).

The protein belongs to the universal ribosomal protein uS4 family. In terms of assembly, part of the 30S ribosomal subunit. Contacts protein S5. The interaction surface between S4 and S5 is involved in control of translational fidelity.

One of the primary rRNA binding proteins, it binds directly to 16S rRNA where it nucleates assembly of the body of the 30S subunit. In terms of biological role, with S5 and S12 plays an important role in translational accuracy. The polypeptide is Small ribosomal subunit protein uS4 (Methanococcoides burtonii (strain DSM 6242 / NBRC 107633 / OCM 468 / ACE-M)).